Reading from the N-terminus, the 432-residue chain is uncharacterized protein (432 aa).

The Cytochrome c domain maps to 223-432 (ASAVRGEALF…KDLIEYLKTR (210 aa)). Residues Cys236, Cys239, and His240 each coordinate heme c.

This is an uncharacterized protein from Sinorhizobium fredii (strain NBRC 101917 / NGR234).